The following is a 245-amino-acid chain: MDGIRTSLDIEEYSDTEVQKNQVLTLEEWQDKWVNGNTAFHQEQGHRLLKKHLDTFLKGESGLRVFFPLCGKAVEMKWFADRGHSVVGVEISELGIREFFTEQNLSYSEEPVTEIPGTKIFKSSSGNISLYCCSIFDLPRTNIGKFDMIWDRGALVAINPGDRKCYADTMLSLLGKKFQYLLCVLSYDPTKHPGPPFYVPHAEIERLFGKICNIHCLEKVDAFEERHKSWGIDYLFEKLYLLTEK.

Residue serine 14 is modified to Phosphoserine. 29–40 (WQDKWVNGNTAF) serves as a coordination point for S-adenosyl-L-methionine. Phenylalanine 40 lines the substrate pocket. An N6-acetyllysine modification is found at lysine 58. S-adenosyl-L-methionine contacts are provided by residues leucine 69, glutamate 90, 134–135 (SI), and arginine 152.

The protein belongs to the class I-like SAM-binding methyltransferase superfamily. TPMT family. Monomer.

It is found in the cytoplasm. It carries out the reaction S-adenosyl-L-methionine + a thiopurine = S-adenosyl-L-homocysteine + a thiopurine S-methylether.. The protein is Thiopurine S-methyltransferase (TPMT) of Pongo pygmaeus (Bornean orangutan).